A 411-amino-acid chain; its full sequence is 2,3-bisphosphoglycerate-independent phosphoglycerate mutase (411 aa).

The protein belongs to the BPG-independent phosphoglycerate mutase family. A-PGAM subfamily.

It catalyses the reaction (2R)-2-phosphoglycerate = (2R)-3-phosphoglycerate. It functions in the pathway carbohydrate degradation; glycolysis; pyruvate from D-glyceraldehyde 3-phosphate: step 3/5. Its function is as follows. Catalyzes the interconversion of 2-phosphoglycerate and 3-phosphoglycerate. This Pyrobaculum islandicum (strain DSM 4184 / JCM 9189 / GEO3) protein is 2,3-bisphosphoglycerate-independent phosphoglycerate mutase.